The following is a 260-amino-acid chain: UPF0246 protein Bcep18194_A5551 (260 aa).

This sequence belongs to the UPF0246 family.

This is UPF0246 protein Bcep18194_A5551 from Burkholderia lata (strain ATCC 17760 / DSM 23089 / LMG 22485 / NCIMB 9086 / R18194 / 383).